The following is a 24-amino-acid chain: Grammistin Pp 4b (24 aa).

Exists as aggregates of 3-4 molecules. In terms of tissue distribution, expressed by the skin glands.

It is found in the secreted. Functionally, thanks to its abundant amphiphilic alpha-helices, it may integrate into membrane phospholipids, leading to lysis of the membrane. Its hemolytic activity is inhibited by phospholipids, but not by cholesterol. Has antibacterial activity with a broad spectrum against various species of bacteria including both Gram-positive and Gram-negative groups. Also has ichthyotoxic activity. This chain is Grammistin Pp 4b, found in Pogonoperca punctata (Clown grouper).